We begin with the raw amino-acid sequence, 383 residues long: Deoxyguanosinetriphosphate triphosphohydrolase-like protein (383 aa).

One can recognise an HD domain in the interval 62-198 (RLTHSLEVST…ASLADDISYI (137 aa)).

This sequence belongs to the dGTPase family. Type 2 subfamily.

The protein is Deoxyguanosinetriphosphate triphosphohydrolase-like protein of Rickettsia prowazekii (strain Madrid E).